Reading from the N-terminus, the 500-residue chain is MKYNNRKLSFNPTTVSIAGTLLTVFFLTRLVLSFFSISLFQLVTFQGIFKPYVPDFKNTPSVEFYDLRNYQGNKDGWQQGDRILFCVPLRDASEHLPMFFNHLNTMTYPHNLIDLSFLVSDSSDNTMGVLLSNLQMAQSQQDKSKRFGNIEIYEKDFGQIIGQSFSDRHGFGAQGPRRKLMARARNWLGSVALKPYHSWVYWRDVDVETIPTTIMEDLMHHDKDVIVPNVWRPLPDWLGNIQPYDLNSWKESEGGLQLADSLDEDAVIVEGYPEYATWRPHLAYMRDPNGNPEDEMELDGIGGVSILAKAKVFRTGSHFPAFSFEKHAETEAFGRLSRRMNYNVIGLPHYVIWHIYEPSSDDLKHMAWMAEEEKRKLEEERIREFYNKIWEIGFEDVRDQWNEERDSILKNIDSTLNNKVTVDWSEEGDGSELVDSKGDFVSPNNQQQQQQQQQQQQQQQQQQQQQQLDGNPQGKPLDDNDKNKKKHPKEVPLDFDPDRN.

The Cytoplasmic segment spans residues 1-15 (MKYNNRKLSFNPTTV). A helical; Signal-anchor for type II membrane protein membrane pass occupies residues 16 to 27 (SIAGTLLTVFFL). At 28–500 (TRLVLSFFSI…VPLDFDPDRN (473 aa)) the chain is on the lumenal side. Positions 424–500 (WSEEGDGSEL…VPLDFDPDRN (77 aa)) are disordered. Positions 446 to 467 (QQQQQQQQQQQQQQQQQQQQQQ) are enriched in low complexity. Over residues 489 to 500 (KEVPLDFDPDRN) the composition is skewed to basic and acidic residues.

Belongs to the ANP1/MMN9/VAN1 family. As to quaternary structure, component of the M-Pol II complex composed of ANP1, MNN9, MNN10, MNN11 and HOC1.

It localises to the endoplasmic reticulum membrane. The protein resides in the golgi apparatus membrane. Involved in the organization of the secretory pathway. Required to maintain a functional Golgi apparatus. Functionally, the M-Pol II complex possesses alpha-1,6-mannosyltransferase activity and is probably involved in the elongation of the mannan backbone of N-linked glycans on cell wall and periplasmic proteins. The sequence is that of Mannan polymerase II complex ANP1 subunit (ANP1) from Saccharomyces cerevisiae (strain ATCC 204508 / S288c) (Baker's yeast).